The primary structure comprises 501 residues: Betaine aldehyde dehydrogenase, chloroplastic (501 aa).

The N-terminal 7 residues, 1 to 7 (MAIRVPS), are a transit peptide targeting the chloroplast. An NAD(+)-binding site is contributed by 238–243 (GSTATG). The active-site Proton acceptor is glutamate 260. Residue cysteine 294 is the Nucleophile of the active site.

This sequence belongs to the aldehyde dehydrogenase family. In terms of assembly, homodimer.

It localises to the plastid. The protein resides in the chloroplast. It carries out the reaction betaine aldehyde + NAD(+) + H2O = glycine betaine + NADH + 2 H(+). It functions in the pathway amine and polyamine biosynthesis; betaine biosynthesis via choline pathway; betaine from betaine aldehyde: step 1/1. The sequence is that of Betaine aldehyde dehydrogenase, chloroplastic (BADH4) from Amaranthus hypochondriacus (Prince-of-Wales feather).